Here is a 580-residue protein sequence, read N- to C-terminus: E3 ubiquitin-protein ligase TRIM45 (580 aa).

The RING-type zinc finger occupies 29–98 (CPTCLRLFKV…QIGILCPVCD (70 aa)). 2 consecutive B box-type zinc fingers follow at residues 130-176 (GQGL…MVDL) and 186-227 (GKPI…YDFT). 8 residues coordinate Zn(2+): cysteine 135, cysteine 138, cysteine 158, histidine 162, cysteine 191, histidine 194, cysteine 214, and histidine 219. Residues 249-329 (VEALEDALAQ…LLADMRTGVE (81 aa)) adopt a coiled-coil conformation. One copy of the Filamin repeat lies at 394-497 (TQEVDPAQCV…VQGSPFNVTV (104 aa)).

This sequence belongs to the TRIM/RBCC family.

It is found in the cytoplasm. The protein localises to the nucleus. It catalyses the reaction S-ubiquitinyl-[E2 ubiquitin-conjugating enzyme]-L-cysteine + [acceptor protein]-L-lysine = [E2 ubiquitin-conjugating enzyme]-L-cysteine + N(6)-ubiquitinyl-[acceptor protein]-L-lysine.. Functionally, E3 ubiquitin-protein ligase that plays a role in the regulation of inflammatory response. Mechanistically, mediates the 'Lys-48'-linked polyubiquitination of TAB2, a regulatory protein of the kinase TAK1, leading to its degradation via the proteasomal pathway and inhibition of the TLR-mediated inflammatory immune response. May act as a transcriptional repressor in mitogen-activated protein kinase signaling pathway. The chain is E3 ubiquitin-protein ligase TRIM45 (Trim45) from Mus musculus (Mouse).